The following is a 106-amino-acid chain: L-rhamnose mutarotase (106 aa).

Residue Y20 participates in substrate binding. Residue H24 is the Proton donor of the active site. Residues Y43 and 78 to 79 contribute to the substrate site; that span reads WW.

It belongs to the rhamnose mutarotase family. In terms of assembly, homodimer.

It is found in the cytoplasm. It carries out the reaction alpha-L-rhamnose = beta-L-rhamnose. Its pathway is carbohydrate metabolism; L-rhamnose metabolism. Its function is as follows. Involved in the anomeric conversion of L-rhamnose. This is L-rhamnose mutarotase from Leptothrix cholodnii (strain ATCC 51168 / LMG 8142 / SP-6) (Leptothrix discophora (strain SP-6)).